Reading from the N-terminus, the 616-residue chain is Chaperone protein HscA (616 aa).

The protein belongs to the heat shock protein 70 family.

Chaperone involved in the maturation of iron-sulfur cluster-containing proteins. Has a low intrinsic ATPase activity which is markedly stimulated by HscB. Involved in the maturation of IscU. In Salmonella newport (strain SL254), this protein is Chaperone protein HscA.